The following is a 100-amino-acid chain: NADH-quinone oxidoreductase subunit K (100 aa).

The next 3 helical transmembrane spans lie at Leu-4–Ile-24, Leu-28–Val-48, and Ile-60–Leu-80.

This sequence belongs to the complex I subunit 4L family. NDH-1 is composed of 13 different subunits. Subunits NuoA, H, J, K, L, M, N constitute the membrane sector of the complex.

The protein resides in the cell inner membrane. It catalyses the reaction a quinone + NADH + 5 H(+)(in) = a quinol + NAD(+) + 4 H(+)(out). In terms of biological role, NDH-1 shuttles electrons from NADH, via FMN and iron-sulfur (Fe-S) centers, to quinones in the respiratory chain. The immediate electron acceptor for the enzyme in this species is believed to be ubiquinone. Couples the redox reaction to proton translocation (for every two electrons transferred, four hydrogen ions are translocated across the cytoplasmic membrane), and thus conserves the redox energy in a proton gradient. This chain is NADH-quinone oxidoreductase subunit K, found in Klebsiella pneumoniae (strain 342).